The primary structure comprises 61 residues: Photosystem II reaction center protein K (61 aa).

A propeptide spanning residues M1–A24 is cleaved from the precursor. The helical transmembrane segment at I36–A56 threads the bilayer.

The protein belongs to the PsbK family. As to quaternary structure, PSII is composed of 1 copy each of membrane proteins PsbA, PsbB, PsbC, PsbD, PsbE, PsbF, PsbH, PsbI, PsbJ, PsbK, PsbL, PsbM, PsbT, PsbX, PsbY, PsbZ, Psb30/Ycf12, at least 3 peripheral proteins of the oxygen-evolving complex and a large number of cofactors. It forms dimeric complexes.

The protein resides in the plastid. It is found in the chloroplast thylakoid membrane. Its function is as follows. One of the components of the core complex of photosystem II (PSII). PSII is a light-driven water:plastoquinone oxidoreductase that uses light energy to abstract electrons from H(2)O, generating O(2) and a proton gradient subsequently used for ATP formation. It consists of a core antenna complex that captures photons, and an electron transfer chain that converts photonic excitation into a charge separation. In Nymphaea alba (White water-lily), this protein is Photosystem II reaction center protein K.